Consider the following 493-residue polypeptide: UDP-N-acetylmuramoyl-L-alanyl-D-glutamate--2,6-diaminopimelate ligase (493 aa).

The UDP-N-acetyl-alpha-D-muramoyl-L-alanyl-D-glutamate site is built by L30 and S32. Residue G117–T123 participates in ATP binding. UDP-N-acetyl-alpha-D-muramoyl-L-alanyl-D-glutamate contacts are provided by residues N158, T159–T160, S186, Q192, and R194. Residue K226 is modified to N6-carboxylysine. Residues R388, D412–R415, G463, and E467 contribute to the meso-2,6-diaminopimelate site. A Meso-diaminopimelate recognition motif motif is present at residues D412–R415.

It belongs to the MurCDEF family. MurE subfamily. It depends on Mg(2+) as a cofactor. Post-translationally, carboxylation is probably crucial for Mg(2+) binding and, consequently, for the gamma-phosphate positioning of ATP.

It is found in the cytoplasm. It carries out the reaction UDP-N-acetyl-alpha-D-muramoyl-L-alanyl-D-glutamate + meso-2,6-diaminopimelate + ATP = UDP-N-acetyl-alpha-D-muramoyl-L-alanyl-gamma-D-glutamyl-meso-2,6-diaminopimelate + ADP + phosphate + H(+). It functions in the pathway cell wall biogenesis; peptidoglycan biosynthesis. Its function is as follows. Catalyzes the addition of meso-diaminopimelic acid to the nucleotide precursor UDP-N-acetylmuramoyl-L-alanyl-D-glutamate (UMAG) in the biosynthesis of bacterial cell-wall peptidoglycan. This Vibrio vulnificus (strain YJ016) protein is UDP-N-acetylmuramoyl-L-alanyl-D-glutamate--2,6-diaminopimelate ligase.